Reading from the N-terminus, the 855-residue chain is MAAAATLRLSAQGTVTFEDVAVNFTWEEWNLLSEAQRCLYRDVTLENLALISSLGCWCGVEDEAAPSKQSIYIQRETQVRTPMAGVSPKKAHPCEMCGPILGDILHVADHQGTHHKQKLHRCEAWGNKLYDSGNFHQHQNEHIGEKPYRGSVEEALFAKRCKLHVSGESSVFSESGKDFLPRSGLLQQEASHTGEKSNSKTECVSPIQCGGAHYSCGESMKHFSTKHILSQHQRLLTREECYVCCECGKSFSKYASLSNHQRVHTEKKHECGECGKSFSKYVSFSNHQRVHTEKKHECGECGKSFSKYVSFSNHQRVHTGKRPYECGECGKSFSKYASFSNHQRVHTEKKHYECGECGKSFSKYVSFSNHQRVHTGKRPYECGECGKSFSKYASFSNHQRVHTDKKHYECGECGKSFSQKSSLIQHQRFHTGEKPYGCEECGKSFSSEGHLRSHQRVHAGERPFKCGECVKSFSHKRSLVHHQRVHSGERPYQCGECGKSFSQKGNLVLHQRVHTGARPYECGECGKSFSSKGHLRNHQQIHTGDRLYECGECGKSFSHKGTLILHQRVHPRERSYGCGECGKSFSSIGHLRSHQRVHTGERPYECGECGKSFSHKRSLVHHQRMHTGERPYKCGDCGKSFNEKGHLRNHQRVHTTERPFKCGECGKCFSHKGNLILHQHGHTGERPYVCRECGKLFKKKSHLLVHQRIHNGEKPYACEACQKFFRNKYQLIAHQRVHTGERPYECNDCGKSFTHSSTFCVHKRIHTGEKPYECSECGKSFAESSSFTKHKRVHTGEKPYECSECGKSFAESSSLTKHKRVHTGEKPYKCEKCGKLFNKKSHLLVHQSSHWRKAI.

Residues 15–91 (VTFEDVAVNF…PMAGVSPKKA (77 aa)) form the KRAB domain. Residues 120–142 (HRCEAWGNKLYDSGNFHQHQNEH) form a C2H2-type 1; degenerate zinc finger. 22 consecutive C2H2-type zinc fingers follow at residues 242 to 264 (YVCCECGKSFSKYASLSNHQRVH), 269 to 291 (HECGECGKSFSKYVSFSNHQRVH), 296 to 318 (HECGECGKSFSKYVSFSNHQRVH), 324 to 346 (YECGECGKSFSKYASFSNHQRVH), 352 to 374 (YECGECGKSFSKYVSFSNHQRVH), 380 to 402 (YECGECGKSFSKYASFSNHQRVH), 408 to 430 (YECGECGKSFSQKSSLIQHQRFH), 436 to 458 (YGCEECGKSFSSEGHLRSHQRVH), 464 to 486 (FKCGECVKSFSHKRSLVHHQRVH), 492 to 514 (YQCGECGKSFSQKGNLVLHQRVH), 520 to 542 (YECGECGKSFSSKGHLRNHQQIH), 548 to 570 (YECGECGKSFSHKGTLILHQRVH), 576 to 598 (YGCGECGKSFSSIGHLRSHQRVH), 604 to 626 (YECGECGKSFSHKRSLVHHQRMH), 632 to 654 (YKCGDCGKSFNEKGHLRNHQRVH), 660 to 682 (FKCGECGKCFSHKGNLILHQHGH), 688 to 710 (YVCRECGKLFKKKSHLLVHQRIH), 716 to 738 (YACEACQKFFRNKYQLIAHQRVH), 744 to 766 (YECNDCGKSFTHSSTFCVHKRIH), 772 to 794 (YECSECGKSFAESSSFTKHKRVH), 800 to 822 (YECSECGKSFAESSSLTKHKRVH), and 828 to 850 (YKCEKCGKLFNKKSHLLVHQSSH). Residue Lys-335 forms a Glycyl lysine isopeptide (Lys-Gly) (interchain with G-Cter in SUMO2) linkage. Lys-391 is covalently cross-linked (Glycyl lysine isopeptide (Lys-Gly) (interchain with G-Cter in SUMO2)).

The protein is Zinc finger protein 814 (ZNF814) of Homo sapiens (Human).